A 309-amino-acid chain; its full sequence is MTQFAFVFPGQGSQSVGMLAEMAANYPIVEETFAEASAALGYDLWALTQQGPAEELNKTWQTQPALLTASVALWRVWQQQGGKMPALMAGHSLGEYSALVCAGVINFADAVRLVEMRGKFMQEAVPEGTGGMSAIIGLDDASIAKACEESAEGQVVSPVNFNSPGQVVIAGHKEAVERAGAACKAAGAKRALPLPVSVPSHCALMKPAADKLAVELAKITFSAPTVPVVNNVDVKCETDAAAIRDALVRQLYNPVQWTKSVEFIAAQGVEHLYEVGPGKVLTGLTKRIVDTLTASALNEPAALSAALTQ.

Residues Ser-92 and His-201 contribute to the active site.

The protein belongs to the FabD family.

The catalysed reaction is holo-[ACP] + malonyl-CoA = malonyl-[ACP] + CoA. It participates in lipid metabolism; fatty acid biosynthesis. This is Malonyl CoA-acyl carrier protein transacylase (fabD) from Salmonella typhimurium (strain LT2 / SGSC1412 / ATCC 700720).